Here is a 148-residue protein sequence, read N- to C-terminus: Deoxyuridine 5'-triphosphate nucleotidohydrolase (148 aa).

The dUMP site is built by S69, G82, D85, Y88, R137, F142, and G143.

The protein belongs to the dUTPase family. In terms of assembly, homotrimer. Mg(2+) is required as a cofactor.

It catalyses the reaction dUTP + H2O = dUMP + diphosphate + H(+). It functions in the pathway pyrimidine metabolism; dUMP biosynthesis; dUMP from dCTP (dUTP route): step 2/2. Functionally, involved in nucleotide metabolism via production of dUMP, the immediate precursor of thymidine nucleotides, and decreases the intracellular concentration of dUTP so that uracil cannot be incorporated into DNA. In Kluyveromyces lactis (strain ATCC 8585 / CBS 2359 / DSM 70799 / NBRC 1267 / NRRL Y-1140 / WM37) (Yeast), this protein is Deoxyuridine 5'-triphosphate nucleotidohydrolase (DUT1).